Reading from the N-terminus, the 574-residue chain is Proline--tRNA ligase (574 aa).

Belongs to the class-II aminoacyl-tRNA synthetase family. ProS type 1 subfamily. Homodimer.

Its subcellular location is the cytoplasm. The enzyme catalyses tRNA(Pro) + L-proline + ATP = L-prolyl-tRNA(Pro) + AMP + diphosphate. In terms of biological role, catalyzes the attachment of proline to tRNA(Pro) in a two-step reaction: proline is first activated by ATP to form Pro-AMP and then transferred to the acceptor end of tRNA(Pro). As ProRS can inadvertently accommodate and process non-cognate amino acids such as alanine and cysteine, to avoid such errors it has two additional distinct editing activities against alanine. One activity is designated as 'pretransfer' editing and involves the tRNA(Pro)-independent hydrolysis of activated Ala-AMP. The other activity is designated 'posttransfer' editing and involves deacylation of mischarged Ala-tRNA(Pro). The misacylated Cys-tRNA(Pro) is not edited by ProRS. The protein is Proline--tRNA ligase of Nautilia profundicola (strain ATCC BAA-1463 / DSM 18972 / AmH).